The chain runs to 37 residues: Large ribosomal subunit protein bL36 (37 aa).

The protein belongs to the bacterial ribosomal protein bL36 family.

This is Large ribosomal subunit protein bL36 from Geobacillus kaustophilus (strain HTA426).